Here is a 286-residue protein sequence, read N- to C-terminus: Elongation factor Ts (286 aa).

The tract at residues 79-82 is involved in Mg(2+) ion dislocation from EF-Tu; it reads TDFV.

This sequence belongs to the EF-Ts family.

The protein resides in the cytoplasm. Its function is as follows. Associates with the EF-Tu.GDP complex and induces the exchange of GDP to GTP. It remains bound to the aminoacyl-tRNA.EF-Tu.GTP complex up to the GTP hydrolysis stage on the ribosome. In Wolbachia pipientis wMel, this protein is Elongation factor Ts.